The chain runs to 111 residues: Protein BEX3 (111 aa).

The interval 1 to 63 is disordered; sequence MANIHQENEE…RQINDGMGGD (63 aa). Residues 68–93 form an interaction with p75NTR/NGFR region; it reads EIFMEEMREIRRKLRELQLRNCLRIL. The interaction with 14-3-3 epsilon stretch occupies residues 68–111; it reads EIFMEEMREIRRKLRELQLRNCLRILMGELSNHHDHHDEFCLMP. The Nuclear export signal signature appears at 77–87; sequence IRRKLRELQLR. Residues 100–104 form a his cluster region; that stretch reads HHDHH. Cysteine 108 is a binding site for Zn(2+).

It belongs to the BEX family. In terms of assembly, self-associates. Binds to the DEATH domain of p75NTR/NGFR. Interacts with 14-3-3 epsilon (YWHAE). Interacts with DIABLO/SMAC. Post-translationally, ubiquitinated. Degraded by the proteasome. As to expression, found in ovarian granulosa cells, testis, prostate and seminal vesicle tissue. High levels also detected in liver.

Its subcellular location is the nucleus. It localises to the cytoplasm. The protein resides in the cytosol. Its function is as follows. May be a signaling adapter molecule involved in NGFR/p75NTR-mediated apoptosis induced by NGF. Plays a role in zinc-triggered neuronal death. In absence of reductive stress, acts as a pseudosubstrate for the CRL2(FEM1B) complex: associates with FEM1B via zinc, thereby preventing association between FEM1B and its substrates. The protein is Protein BEX3 of Homo sapiens (Human).